The chain runs to 81 residues: uncharacterized protein (81 aa).

The N-terminal stretch at 1 to 31 (MRYNSFLSVLALFNVLLWFTFILAISMTFSA) is a signal peptide. The helical transmembrane segment at 52 to 74 (WFFVLLPYVIGLFFAIFDSATIG) threads the bilayer.

Its subcellular location is the membrane. This is an uncharacterized protein from Pasteurella multocida (strain Pm70).